The following is a 156-amino-acid chain: WASQVSENRPVCKAIIQGKQFEGLVDTGADVSIIALNQWPKNWPKQKAVTGLVGIGTASEVYQSTEILHCLGPDNQESTVQPMITSIPLNLWGRDLLQQWGAEITMPAPSYSPTSQKIMTKMGYIPGKGLGKNEDGIKIPVEAKINQEREGIGNPC.

Residues 21-96 form the Peptidase A2 domain; sequence FEGLVDTGAD…IPLNLWGRDL (76 aa). Residue aspartate 26 is part of the active site. The G-patch domain occupies 111–156; it reads YSPTSQKIMTKMGYIPGKGLGKNEDGIKIPVEAKINQEREGIGNPC.

Belongs to the peptidase A2 family. HERV class-II K(HML-2) subfamily. In terms of assembly, active as a homodimer. Autoproteolytically processed at the N-terminus. Expected C-terminal autoprocessing not detected. The sequence shown is that of the processed Pro protein.

The enzyme catalyses Processing at the authentic HIV-1 PR recognition site and release of the mature p17 matrix and the p24 capsid protein, as a result of the cleavage of the -SQNY-|-PIVQ- cleavage site.. Functionally, retroviral proteases have roles in the processing of the primary translation products and the maturation of the viral particle. Endogenous Pro proteins may have kept, lost or modified their original function during evolution. This Homo sapiens (Human) protein is Endogenous retrovirus group K member 6 Pro protein (ERVK-6).